The sequence spans 459 residues: UDP-glycosyltransferase 78D3 (459 aa).

UDP-alpha-D-glucose is bound by residues 338 to 340 (APQ), 355 to 363 (HGGWNSVLE), and 377 to 380 (FGDH).

The protein belongs to the UDP-glycosyltransferase family.

Functionally, possesses low quercetin 3-O-glucosyltransferase activity in vitro. The chain is UDP-glycosyltransferase 78D3 (UGT78D3) from Arabidopsis thaliana (Mouse-ear cress).